We begin with the raw amino-acid sequence, 305 residues long: Mitochondrial uncoupling protein 2 (305 aa).

Solcar repeat units follow at residues 10-104, 114-205, and 214-297; these read ISFL…VKTL, IPLY…IKET, and DSVL…VKKV. 6 helical membrane-spanning segments follow: residues 16-36, 73-93, 120-140, 179-199, 220-240, and 270-290; these read FICS…LDTA, ISGL…YGGL, ILAA…TDLV, TGLG…LASY, LLAG…IDVV, and YKGF…MFLT.

This sequence belongs to the mitochondrial carrier (TC 2.A.29) family.

It localises to the mitochondrion inner membrane. Functionally, PUMPS are mitochondrial transporter proteins that create proton leaks across the inner mitochondrial membrane, thus uncoupling oxidative phosphorylation. This leads to a decrease in the efficiency of oxidative phosphorylation and an increase in heat production. May be involved in protecting plant cells against oxidative stress damage. The protein is Mitochondrial uncoupling protein 2 (PUMP2) of Arabidopsis thaliana (Mouse-ear cress).